We begin with the raw amino-acid sequence, 408 residues long: Argininosuccinate synthase (408 aa).

Residues 11-19 and Ala38 contribute to the ATP site; that span reads AYSGGLDTS. L-citrulline-binding residues include Tyr91 and Ser96. Gly121 is an ATP binding site. Thr123, Asn127, and Asp128 together coordinate L-aspartate. Position 127 (Asn127) interacts with L-citrulline. Residues Arg131, Ser182, Ser191, Glu267, and Tyr279 each contribute to the L-citrulline site.

The protein belongs to the argininosuccinate synthase family. Type 1 subfamily. Homotetramer.

It is found in the cytoplasm. It catalyses the reaction L-citrulline + L-aspartate + ATP = 2-(N(omega)-L-arginino)succinate + AMP + diphosphate + H(+). Its pathway is amino-acid biosynthesis; L-arginine biosynthesis; L-arginine from L-ornithine and carbamoyl phosphate: step 2/3. This chain is Argininosuccinate synthase, found in Zymomonas mobilis subsp. mobilis (strain ATCC 31821 / ZM4 / CP4).